Reading from the N-terminus, the 43-residue chain is Protein PsbN (43 aa).

A helical transmembrane segment spans residues Thr-5–Phe-27.

It belongs to the PsbN family.

It localises to the plastid. Its subcellular location is the chloroplast thylakoid membrane. Its function is as follows. May play a role in photosystem I and II biogenesis. The protein is Protein PsbN of Mesostigma viride (Green alga).